The primary structure comprises 220 residues: SAGA-associated factor 11 homolog (220 aa).

The interval 1-38 (MSTGTANSAVSSKSTNSTTSTSKVPVNEKSNNSQNANT) is disordered. An SGF11-type zinc finger spans residues 126-147 (CTCPNCDRPVSAARFAPHLEKC). 2 stretches are compositionally biased toward low complexity: residues 160–177 (RRLA…SSSS) and 204–220 (SQNS…GKTF). A disordered region spans residues 160 to 220 (RRLATKESNS…GSKKNNGKTF (61 aa)).

It belongs to the SGF11 family. As to quaternary structure, component of some SAGA transcription coactivator-HAT complexes. Within the SAGA complex, participates in a subcomplex of SAGA called the DUB module (deubiquitination module).

It localises to the nucleus. In terms of biological role, component of the transcription regulatory histone acetylation (HAT) complex SAGA, a multiprotein complex that activates transcription by remodeling chromatin and mediating histone acetylation and deubiquitination. Within the SAGA complex, participates in a subcomplex that specifically deubiquitinates histone H2B. The SAGA complex is recruited to specific gene promoters by activators, where it is required for transcription. This Musca domestica (House fly) protein is SAGA-associated factor 11 homolog.